The sequence spans 185 residues: MTNQIYKQVFSFFLSVLLLQSSTVSYVPKSFDLKKPCKHFVLYLHNIAYDGDNAANATAATIVKPLGLGDHSFGELIIINNPVTLDQNYLSKPVARAQGFYFYNMKTNYNAWVAWTLVFNSTKHKGTFTIMDANPFGLQPARDLSIVGGTGDFLMTRGIATFKTKLTQGSKYFCVEMNIKLYECY.

Residues 1 to 25 (MTNQIYKQVFSFFLSVLLLQSSTVS) form the signal peptide. The cysteines at positions 37 and 184 are disulfide-linked. Residues N56 and N120 are each glycosylated (N-linked (GlcNAc...) asparagine).

Belongs to the plant dirigent protein family. As to quaternary structure, homodimer. As to expression, seed coat specific expression.

It localises to the secreted. Its subcellular location is the extracellular space. It is found in the apoplast. Its function is as follows. Dirigent proteins impart stereoselectivity on the phenoxy radical-coupling reaction, yielding optically active lignans from two molecules of coniferyl alcohol in the biosynthesis of lignans, flavonolignans, and alkaloids and thus plays a central role in plant secondary metabolism. Required for seed accumulation of neolignans. The protein is Dirigent protein 12 (DIR12) of Arabidopsis thaliana (Mouse-ear cress).